A 123-amino-acid polypeptide reads, in one-letter code: Large ribosomal subunit protein bL19 (123 aa).

This sequence belongs to the bacterial ribosomal protein bL19 family.

This protein is located at the 30S-50S ribosomal subunit interface and may play a role in the structure and function of the aminoacyl-tRNA binding site. In Bdellovibrio bacteriovorus (strain ATCC 15356 / DSM 50701 / NCIMB 9529 / HD100), this protein is Large ribosomal subunit protein bL19.